The sequence spans 294 residues: Elongation factor Ts (294 aa).

The involved in Mg(2+) ion dislocation from EF-Tu stretch occupies residues 79 to 82 (TDFV).

This sequence belongs to the EF-Ts family.

The protein localises to the cytoplasm. In terms of biological role, associates with the EF-Tu.GDP complex and induces the exchange of GDP to GTP. It remains bound to the aminoacyl-tRNA.EF-Tu.GTP complex up to the GTP hydrolysis stage on the ribosome. This chain is Elongation factor Ts (tsf), found in Geobacillus kaustophilus (strain HTA426).